The sequence spans 473 residues: Serine/threonine-protein phosphatase T (473 aa).

TPR repeat units lie at residues 5–38 (ALEL…DSTN), 40–72 (ILYS…DPEY), and 73–106 (AKAY…APSD). A catalytic region spans residues 159 to 472 (KQITKEFVED…MAYANGLLSG (314 aa)). Positions 217, 219, 246, and 278 each coordinate Mn(2+). Residue H279 is the Proton donor/acceptor of the active site. The Mn(2+) site is built by H327 and H404.

The protein belongs to the PPP phosphatase family. PP-5 (PP-T) subfamily. Mg(2+) serves as cofactor. The cofactor is Mn(2+).

It localises to the nucleus. It carries out the reaction O-phospho-L-seryl-[protein] + H2O = L-seryl-[protein] + phosphate. It catalyses the reaction O-phospho-L-threonyl-[protein] + H2O = L-threonyl-[protein] + phosphate. Functionally, protein phosphatase that specifically binds to and dephosphorylates the molecular chaperone Hsp90. Dephosphorylation positively regulates the Hsp90 chaperone machinery. In Schizosaccharomyces pombe (strain 972 / ATCC 24843) (Fission yeast), this protein is Serine/threonine-protein phosphatase T (ppt1).